The following is a 56-amino-acid chain: Meucin-25 (56 aa).

An N-terminal signal peptide occupies residues 1–31 (MFRIEYSLVQLLLRNVTIPLLLIIQMHIMSS).

The protein belongs to the non-disulfide-bridged peptide (NDBP) superfamily. Antimalarial peptide (group 5) family. As to expression, expressed by the venom gland.

The protein resides in the secreted. This synthetic cationic peptide inhibits the development of Plasmodium berghei ookinetes, kills intraerythrocytic P.falciparum, and is cytotoxic to the Drosophila S2 cell at micromolar concentrations. No antibacterial, antifungal and hemolytic activities have been found at micromolar concentrations. The polypeptide is Meucin-25 (Mesobuthus eupeus (Lesser Asian scorpion)).